The sequence spans 89 residues: Small ribosomal subunit protein uS15 (89 aa).

It belongs to the universal ribosomal protein uS15 family. In terms of assembly, part of the 30S ribosomal subunit. Forms a bridge to the 50S subunit in the 70S ribosome, contacting the 23S rRNA.

One of the primary rRNA binding proteins, it binds directly to 16S rRNA where it helps nucleate assembly of the platform of the 30S subunit by binding and bridging several RNA helices of the 16S rRNA. Functionally, forms an intersubunit bridge (bridge B4) with the 23S rRNA of the 50S subunit in the ribosome. The chain is Small ribosomal subunit protein uS15 from Dictyoglomus turgidum (strain DSM 6724 / Z-1310).